The sequence spans 621 residues: Chaperone protein HtpG (621 aa).

The a; substrate-binding stretch occupies residues 1–328 (MTQEKKKFDA…SEDLPLNISR (328 aa)). Residues 329–544 (ESLQHNNVLE…DTAMDIRMER (216 aa)) form a b region. The segment at 545 to 621 (FLIEQKQIAS…LNDILQKAIL (77 aa)) is c.

It belongs to the heat shock protein 90 family. Homodimer.

It localises to the cytoplasm. Functionally, molecular chaperone. Has ATPase activity. The sequence is that of Chaperone protein HtpG from Rickettsia typhi (strain ATCC VR-144 / Wilmington).